We begin with the raw amino-acid sequence, 237 residues long: 7-cyano-7-deazaguanine synthase (237 aa).

10-20 (FSGGQDSTTCL) lines the ATP pocket. 4 residues coordinate Zn(2+): Cys-189, Cys-198, Cys-201, and Cys-204.

This sequence belongs to the QueC family. It depends on Zn(2+) as a cofactor.

It catalyses the reaction 7-carboxy-7-deazaguanine + NH4(+) + ATP = 7-cyano-7-deazaguanine + ADP + phosphate + H2O + H(+). Its pathway is purine metabolism; 7-cyano-7-deazaguanine biosynthesis. In terms of biological role, catalyzes the ATP-dependent conversion of 7-carboxy-7-deazaguanine (CDG) to 7-cyano-7-deazaguanine (preQ(0)). In Aeromonas salmonicida (strain A449), this protein is 7-cyano-7-deazaguanine synthase.